The following is a 94-amino-acid chain: Aspartyl/glutamyl-tRNA(Asn/Gln) amidotransferase subunit C (94 aa).

Belongs to the GatC family. In terms of assembly, heterotrimer of A, B and C subunits.

It carries out the reaction L-glutamyl-tRNA(Gln) + L-glutamine + ATP + H2O = L-glutaminyl-tRNA(Gln) + L-glutamate + ADP + phosphate + H(+). The catalysed reaction is L-aspartyl-tRNA(Asn) + L-glutamine + ATP + H2O = L-asparaginyl-tRNA(Asn) + L-glutamate + ADP + phosphate + 2 H(+). In terms of biological role, allows the formation of correctly charged Asn-tRNA(Asn) or Gln-tRNA(Gln) through the transamidation of misacylated Asp-tRNA(Asn) or Glu-tRNA(Gln) in organisms which lack either or both of asparaginyl-tRNA or glutaminyl-tRNA synthetases. The reaction takes place in the presence of glutamine and ATP through an activated phospho-Asp-tRNA(Asn) or phospho-Glu-tRNA(Gln). The protein is Aspartyl/glutamyl-tRNA(Asn/Gln) amidotransferase subunit C of Opitutus terrae (strain DSM 11246 / JCM 15787 / PB90-1).